Consider the following 764-residue polypeptide: Complement factor B (764 aa).

The N-terminal stretch at 1 to 25 (MGSNLSPQLCLMPFILGLLSGGVTT) is a signal peptide. 3 Sushi domains span residues 35–100 (ESCS…ECRA), 101–160 (IHCP…ICDN), and 163–220 (GYCS…SCQD). Cystine bridges form between Cys37–Cys76, Cys62–Cys98, Cys103–Cys145, Cys131–Cys158, Cys165–Cys205, and Cys191–Cys218. 2 N-linked (GlcNAc...) asparagine glycosylation sites follow: Asn122 and Asn142. Positions 270–469 (NIYLVLDGSD…NLEDVFYQMI (200 aa)) constitute a VWFA domain. Residues Ser278 and Ser280 each contribute to the Mg(2+) site. Asn285 is a glycosylation site (N-linked (GlcNAc...) asparagine). Position 353 (Thr353) interacts with Mg(2+). N-linked (GlcNAc...) asparagine glycosylation is present at Asn378. The Peptidase S1 domain maps to 477-757 (LCGMVWEHRK…VLPWLKEKLQ (281 aa)). 5 cysteine pairs are disulfide-bonded: Cys478/Cys596, Cys511/Cys527, Cys599/Cys615, Cys656/Cys682, and Cys695/Cys725. Active-site charge relay system residues include His526 and Asp576. The active-site Charge relay system is the Ser699.

The protein belongs to the peptidase S1 family. In terms of assembly, monomer. Interacts with complement C3b; this interaction is dependent on the presence of Mg(2+). Catalytic component of the C3 convertase of the alternative complement pathway, also named C3bBb, composed of complement factor B Bb and complement C3b. Catalytic component of the C5 convertase of the alternative complement pathway, also named C3bBb3b, composed of complement factor B Bb and additional molecules of complement C3b. Interacts to CFP; this interaction contributes to the stabilization of the active C3-convertase enzyme complex. The cofactor is Mg(2+). Mn(2+) is required as a cofactor. In terms of processing, cleaved by CFD following activation of the alternative complement system, generating Ba and Bb chains. Cleavage and activation takes place when CFB is already associated with complement C3b.

It is found in the secreted. It localises to the cell surface. It carries out the reaction Cleavage of Arg-|-Ser bond in complement component C3 alpha-chain to yield C3a and C3b, and Arg-|-Xaa bond in complement component C5 alpha-chain to yield C5a and C5b.. Functionally, precursor of the catalytic component of the C3 and C5 convertase complexes of the alternative pathway of the complement system, a cascade of proteins that leads to phagocytosis and breakdown of pathogens and signaling that strengthens the adaptive immune system. The alternative complement pathway acts as an amplification loop that enhances other complement pathways (classical, lectin and GZMK) by promoting formation of additional C3 and C5 convertases. CFB is cleaved and activated by CFD to generate Ba and Bb chains; Bb chain constituting the catalytic component of the C3 and C5 convertases. Serine protease component of the complement C3 and C5 convertase complexes of the alternative complement pathway. Following cleavage and activation by factor D (CFD), forms the C3 convertase together with complement C3b. As part of the C3 convertase, cleaves and activates C3 into C3a anaphylatoxin and C3b opsonin, the next components of the complement pathways. When an additional complement C3b molecule binds to the C3 convertase, forms the C5 convertase, which cleaves and activates C5 into C5a anaphylatoxin and C5b component of the membrane attack complex. In terms of biological role, involved in proliferation and differentiation of preactivated B-lymphocytes, rapid spreading of peripheral blood monocytes, stimulation of lymphocyte blastogenesis and lysis of erythrocytes. The polypeptide is Complement factor B (CFB) (Pan troglodytes (Chimpanzee)).